Reading from the N-terminus, the 356-residue chain is Cdc42 effector protein 4 (356 aa).

An N6-methyllysine modification is found at K5. S18 is modified (phosphoserine). One can recognise a CRIB domain in the interval 27–41 (ISAPLGDFRHTMHVG). The interval 51-102 (SFLNSKAGEPDGESLDEQPSSSSSKRSLLSRKFRGSKRSQSVTRGEREQRDM) is disordered. S64 is modified (phosphoserine). Residues 78–87 (LLSRKFRGSK) show a composition bias toward basic residues. 3 positions are modified to phosphoserine: S105, S109, and S118. 2 disordered regions span residues 122 to 182 (LNEK…LDEQ) and 257 to 356 (VAAP…EIRV). Residues 123-132 (NEKEAAEKGT) are compositionally biased toward basic and acidic residues. Positions 133 to 143 (SKLPKSLSSSP) are enriched in low complexity. 6 positions are modified to phosphoserine: S138, S140, S142, S174, S292, and S295. A compositionally biased stretch (low complexity) spans 287 to 315 (AAAAPSPGSARSMGSHTTRDSSSLSSCTS). The segment covering 318–344 (LEERSPAFRGPDRARAAVSRQPDKEFS) has biased composition (basic and acidic residues). The segment covering 345-356 (FMDEEEEDEIRV) has biased composition (acidic residues).

It belongs to the BORG/CEP family. In terms of assembly, interacts with CDC42 and RHOQ, in a GTP-dependent manner. As to expression, not detected in any of the adult tissues tested. May be expressed only in fetal or embryonic tissues.

It is found in the endomembrane system. The protein resides in the cytoplasm. The protein localises to the cytoskeleton. Functionally, probably involved in the organization of the actin cytoskeleton. May act downstream of CDC42 to induce actin filament assembly leading to cell shape changes. Induces pseudopodia formation, when overexpressed in fibroblasts. The polypeptide is Cdc42 effector protein 4 (CDC42EP4) (Homo sapiens (Human)).